The primary structure comprises 123 residues: UPF0102 protein DR_2282 (123 aa).

Belongs to the UPF0102 family.

The polypeptide is UPF0102 protein DR_2282 (Deinococcus radiodurans (strain ATCC 13939 / DSM 20539 / JCM 16871 / CCUG 27074 / LMG 4051 / NBRC 15346 / NCIMB 9279 / VKM B-1422 / R1)).